The primary structure comprises 234 residues: Potassium/proton antiporter CemA (234 aa).

A run of 4 helical transmembrane segments spans residues 8 to 28 (IPLR…WIPL), 117 to 137 (TICF…LFIL), 157 to 177 (ILFV…ELLI), and 193 to 213 (IILS…FKYW).

It belongs to the CemA family.

The protein resides in the plastid. Its subcellular location is the chloroplast inner membrane. It carries out the reaction K(+)(in) + H(+)(out) = K(+)(out) + H(+)(in). In terms of biological role, contributes to K(+)/H(+) antiport activity by supporting proton efflux to control proton extrusion and homeostasis in chloroplasts in a light-dependent manner to modulate photosynthesis. Prevents excessive induction of non-photochemical quenching (NPQ) under continuous-light conditions. Indirectly promotes efficient inorganic carbon uptake into chloroplasts. This Citrus sinensis (Sweet orange) protein is Potassium/proton antiporter CemA.